A 119-amino-acid polypeptide reads, in one-letter code: Small ribosomal subunit protein uS13 (119 aa).

The interval 90-119 is disordered; the sequence is IRHRRGLPLRGQRTRSNARTRKGKRKPIRS. Residues 91–119 are compositionally biased toward basic residues; the sequence is RHRRGLPLRGQRTRSNARTRKGKRKPIRS.

Belongs to the universal ribosomal protein uS13 family. In terms of assembly, part of the 30S ribosomal subunit. Forms a loose heterodimer with protein S19. Forms two bridges to the 50S subunit in the 70S ribosome.

Located at the top of the head of the 30S subunit, it contacts several helices of the 16S rRNA. In the 70S ribosome it contacts the 23S rRNA (bridge B1a) and protein L5 of the 50S subunit (bridge B1b), connecting the 2 subunits; these bridges are implicated in subunit movement. Contacts the tRNAs in the A and P-sites. The sequence is that of Small ribosomal subunit protein uS13 from Coxiella burnetii (strain CbuK_Q154) (Coxiella burnetii (strain Q154)).